A 542-amino-acid chain; its full sequence is Putative DEAD-box ATP-dependent RNA helicase 43 (542 aa).

A Q motif motif is present at residues 97–125; sequence KNFMDMKFPSPLLRMLKDKGIMHPTPIQV. The Helicase ATP-binding domain occupies 128-312; the sequence is LPVVLSGRDM…TSALVKPVTV (185 aa). Position 141 to 148 (141 to 148) interacts with ATP; the sequence is AFTGSGKT. Positions 260 to 263 match the DEAD box motif; sequence DEAD. Residues 323 to 483 enclose the Helicase C-terminal domain; sequence DVIQEVEYVK…RIPPVLAELN (161 aa). The CCHC-type zinc-finger motif lies at 499-516; the sequence is KGCAYCGGLGHRILQCPK.

The protein belongs to the DEAD box helicase family. DDX41 subfamily.

The catalysed reaction is ATP + H2O = ADP + phosphate + H(+). The sequence is that of Putative DEAD-box ATP-dependent RNA helicase 43 (RH43) from Arabidopsis thaliana (Mouse-ear cress).